We begin with the raw amino-acid sequence, 81 residues long: MGGLQPWHWVIVIAVFVLLFGAKKLPDAARSLGKSMRIFKSEIKEMQAESKGDEPKPATPIASERVDTTAPEQQSTDRHTA.

The helical transmembrane segment at 1-21 (MGGLQPWHWVIVIAVFVLLFG) threads the bilayer. Residues 46–56 (MQAESKGDEPK) are compositionally biased toward basic and acidic residues. Residues 46–81 (MQAESKGDEPKPATPIASERVDTTAPEQQSTDRHTA) are disordered.

Belongs to the TatA/E family. The Tat system comprises two distinct complexes: a TatABC complex, containing multiple copies of TatA, TatB and TatC subunits, and a separate TatA complex, containing only TatA subunits. Substrates initially bind to the TatABC complex, which probably triggers association of the separate TatA complex to form the active translocon.

It is found in the cell membrane. In terms of biological role, part of the twin-arginine translocation (Tat) system that transports large folded proteins containing a characteristic twin-arginine motif in their signal peptide across membranes. TatA could form the protein-conducting channel of the Tat system. In Mycolicibacterium smegmatis (strain ATCC 700084 / mc(2)155) (Mycobacterium smegmatis), this protein is Sec-independent protein translocase protein TatA.